The sequence spans 543 residues: Tubby-related protein 1 (543 aa).

The tract at residues 1 to 290 (MPLQEETLRE…RASSPPVEVG (290 aa)) is disordered. Composition is skewed to basic and acidic residues over residues 46 to 56 (PETPDSLESKP) and 86 to 99 (FLRD…DPRE). Acidic residues-rich tracts occupy residues 110-132 (GGEE…EEEE) and 244-255 (KKEEEEEVEEEV). Positions 267-276 (GRAKGKGKKK) are enriched in basic residues.

This sequence belongs to the TUB family. Homodimer. May interact with ABCF1, PSIP1, ZEB1 and HMGB2 (Potential). Interacts with F-actin. Interacts with DNM1. Interacts with TUB. Interacts with TYRO3. As to expression, retina specific. Detected in the outer plexiform layer in photoreceptor cells (at protein level).

The protein resides in the cytoplasm. It localises to the cell membrane. It is found in the secreted. The protein localises to the synapse. Required for normal development of photoreceptor synapses. Required for normal photoreceptor function and for long-term survival of photoreceptor cells. Interacts with cytoskeleton proteins and may play a role in protein transport in photoreceptor cells. Binds lipids, especially phosphatidylinositol 3-phosphate, phosphatidylinositol 4-phosphate, phosphatidylinositol 5-phosphate, phosphatidylinositol 3,4-bisphosphate, phosphatidylinositol 4,5-bisphosphate, phosphatidylinositol 3,4,5-bisphosphate, phosphatidylserine and phosphatidic acid (in vitro). Contribute to stimulation of phagocytosis of apoptotic retinal pigment epithelium (RPE) cells and macrophages. The polypeptide is Tubby-related protein 1 (Tulp1) (Mus musculus (Mouse)).